Consider the following 454-residue polypeptide: MHTIAIGLNYKTAPVEIREKLVFSEHQLPEALKKLRSSKSMMECVILSTCNRTELYVVADQLHTGRYFAKAFLAEWFSVDMEDVTPYLVIRENDHAIEHLFRVACGLDSMVIGETQILGQVKQAFLLAQEEKVTGTVFNQLFKQAVTLGKRVHSSTEISSQAVSVSYAGVELGKKIFGTFSGKHVLILGAGKMSELTAKHLYANGAASISVMNRTKENAVELASQFAGTARSFAELNDALKEADVVISSTGARDFVVTKENAADALKKRKGRPLFAIDIAVPRDIDPEIATISDVYLYDIDDLQNIVETNKKERKKEAEKIGVMIEAEIDDFKAWLNTLGVVPLITALREKALQIQGDTMESIERKLPHLSERDIKVLNKHTKSIVNQLLRDPLTRVKELAAEPDAKHSLELFKTIFALEAQIELAEKAEADHAEQSWKEGQRPSLNQGMALRT.

Residues 49 to 52, Ser109, 114 to 116, and Gln120 contribute to the substrate site; these read TCNR and ETQ. The active-site Nucleophile is Cys50. NADP(+) is bound at residue 189-194; sequence GAGKMS. Positions 432-442 are enriched in basic and acidic residues; it reads DHAEQSWKEGQ. The segment at 432–454 is disordered; that stretch reads DHAEQSWKEGQRPSLNQGMALRT.

This sequence belongs to the glutamyl-tRNA reductase family. In terms of assembly, homodimer.

The catalysed reaction is (S)-4-amino-5-oxopentanoate + tRNA(Glu) + NADP(+) = L-glutamyl-tRNA(Glu) + NADPH + H(+). Its pathway is porphyrin-containing compound metabolism; protoporphyrin-IX biosynthesis; 5-aminolevulinate from L-glutamyl-tRNA(Glu): step 1/2. Functionally, catalyzes the NADPH-dependent reduction of glutamyl-tRNA(Glu) to glutamate 1-semialdehyde (GSA). The sequence is that of Glutamyl-tRNA reductase from Shouchella clausii (strain KSM-K16) (Alkalihalobacillus clausii).